Consider the following 173-residue polypeptide: Co-chaperone protein HscB homolog (173 aa).

A J domain is found at cysteine 5–leucine 77.

Belongs to the HscB family. In terms of assembly, interacts with HscA and stimulates its ATPase activity.

Co-chaperone involved in the maturation of iron-sulfur cluster-containing proteins. Seems to help targeting proteins to be folded toward HscA. The chain is Co-chaperone protein HscB homolog from Pseudomonas paraeruginosa (strain DSM 24068 / PA7) (Pseudomonas aeruginosa (strain PA7)).